A 2031-amino-acid chain; its full sequence is Pericentriolar material 1 protein (2031 aa).

Disordered stretches follow at residues 1–82 and 111–165; these read MATG…HTFP and DQRS…STRS. A self-association region spans residues 1–484; it reads MATGGGPPDE…RSTEQRTLGS (484 aa). A compositionally biased stretch (basic and acidic residues) spans 42–58; it reads RSAEKNKKKFVECDLRL. Over residues 114–130 the composition is skewed to polar residues; sequence SIGSDSQGRATAANNKR. Residues 149–162 are compositionally biased toward basic and acidic residues; sequence NKEKSKSPPKREAS. Residues 302 to 394 are a coiled coil; sequence RQEAKEELKN…FHNQLHDSED (93 aa). Residues 469–494 are compositionally biased toward polar residues; the sequence is SSVSPRRSTEQRTLGSAVSSALTSDN. Residues 469-495 are disordered; the sequence is SSVSPRRSTEQRTLGSAVSSALTSDNR. Residues 523-549 are a coiled coil; the sequence is AEKLKKLKEVRKRLNELRELVHYYEQT. 2 disordered regions span residues 550 to 590 and 649 to 678; these read SDMM…NPQY and KEED…NSVA. The span at 562–580 shows a compositional bias: acidic residues; it reads KDEDETEDSEYDSEQEDAE. 2 stretches are compositionally biased toward polar residues: residues 581–590 and 667–677; these read PTTNIRNPQY and SRASLSSQNSV. Positions 684 to 711 form a coiled coil; it reads VDFEQKFNRLVAAKQKLKQLQDLVAMYG. Residues 712–752 are disordered; sequence DDSESEPVAPERSFSGDQFPPEATTLKQQPNNTRPNVSKAQ. Over residues 736 to 750 the composition is skewed to polar residues; sequence TLKQQPNNTRPNVSK. The interval 745–1271 is self-association and localization to centrosomes; the sequence is RPNVSKAQKD…PACFGAGLSA (527 aa). Residues 757-805 adopt a coiled-coil conformation; the sequence is LKEQAREKFYESKLQQQQRELSQLQEERKKLIEIQEKIQTLRKACPDLQ. Polar residues-rich tracts occupy residues 806 to 823 and 888 to 898; these read LSTS…NRQM and QGNTETTSAAS. Disordered regions lie at residues 806–835 and 882–1014; these read LSTS…VNTN and AEHQ…VSMR. Residues 858-892 are a coiled coil; sequence SEIRKHQILREDLRQRRKQLETLMAEHQRRQGNTE. Acidic residues predominate over residues 930 to 945; the sequence is LEEEEEEEEVDDEECL. 2 stretches are compositionally biased toward polar residues: residues 960-981 and 1004-1013; these read NTSC…FNGR and KTRQQQNVSM. Positions 1025-1049 form a coiled coil; it reads LSHVEEKEHWQEQIDQIKKQLDYST. 4 disordered regions span residues 1123-1146, 1219-1247, 1318-1345, and 1514-1533; these read QHLQ…TSPN, KPFE…QGRR, SAQA…QKSK, and PVCQ…LSTS. Basic and acidic residues-rich tracts occupy residues 1127–1136 and 1221–1247; these read GESHQREDRG and FESH…QGRR. Over residues 1331–1345 the composition is skewed to basic residues; it reads KAKNKKRKVFHQKSK. Residues 1524 to 1533 are compositionally biased toward polar residues; it reads GDNISSLSTS. A coiled-coil region spans residues 1550-1599; that stretch reads HFDQALARMREYERMKSETENGLVADCCNNLNAAASSLEGTNDEARGRAQ. 4 disordered regions span residues 1746–1802, 1817–1870, 1922–1965, and 2007–2031; these read ADKE…DLDE, ALTN…EANI, NNVK…DEDD, and ENGA…IHPA. Over residues 1771-1784 the composition is skewed to basic and acidic residues; it reads KDETETAEENRNFD. Residues 1824 to 1835 show a composition bias toward acidic residues; the sequence is GEDENEDEENYE. Polar residues-rich tracts occupy residues 1843 to 1852 and 1922 to 1942; these read VQTSLETSSE and NNVK…SDTE.

Belongs to the PCM1 family. In terms of assembly, self-associates. Interacts with cetn3.

Its subcellular location is the cytoplasm. It localises to the cytoskeleton. The protein resides in the microtubule organizing center. It is found in the centrosome. The protein localises to the cytoplasmic granule. Its subcellular location is the centriolar satellite. It localises to the cilium basal body. Functionally, required to anchor microtubules to the centrosome. Required for centrosome assembly and function. Essential for the correct localization of several centrosomal proteins including cetn3 and pcnt. Probably involved in the biogenesis of cilia. In Xenopus laevis (African clawed frog), this protein is Pericentriolar material 1 protein (pcm1).